A 151-amino-acid polypeptide reads, in one-letter code: 3-hydroxyacyl-[acyl-carrier-protein] dehydratase FabZ (151 aa).

The active site involves His-54.

It belongs to the thioester dehydratase family. FabZ subfamily.

The protein resides in the cytoplasm. It catalyses the reaction a (3R)-hydroxyacyl-[ACP] = a (2E)-enoyl-[ACP] + H2O. Involved in unsaturated fatty acids biosynthesis. Catalyzes the dehydration of short chain beta-hydroxyacyl-ACPs and long chain saturated and unsaturated beta-hydroxyacyl-ACPs. This Blochmanniella floridana protein is 3-hydroxyacyl-[acyl-carrier-protein] dehydratase FabZ.